An 842-amino-acid chain; its full sequence is ATP-binding cassette sub-family B member 6 (842 aa).

The Lumenal segment spans residues 1-26 (MVTVGNYCEAEGPVGPAWMQDGLSPC). The interval 1–205 (MVTVGNYCEA…SGGLFVLGLW (205 aa)) is required for the lysosomal targeting. The interval 1–236 (MVTVGNYCEA…RSQVRSAAQQ (236 aa)) is required for ATPase activity. Asn6 carries an N-linked (GlcNAc...) asparagine glycan. Cys8 and Cys26 are disulfide-bonded. A helical membrane pass occupies residues 27-47 (FFFTLVPSTRMALGTLALVLA). The Cytoplasmic segment spans residues 48 to 72 (LPCRRRERPAGADSLSWGAGPRISP). A helical transmembrane segment spans residues 73–93 (YVLQLLLATLQAALPLAGLAG). Residues 94 to 106 (RVGTARGAPLPSY) lie on the Lumenal side of the membrane. A helical membrane pass occupies residues 107–127 (LLLASVLESLAGACGLWLLVV). Over 128–147 (ERSQARQRLAMGIWIKFRHS) the chain is Cytoplasmic. A helical membrane pass occupies residues 148 to 168 (PGLLLLWTVAFAAENLALVSW). The Lumenal segment spans residues 169–185 (NSPQWWWARADLGQQVQ). The helical transmembrane segment at 186-206 (FSLWVLRYVVSGGLFVLGLWA) threads the bilayer. Residues 207 to 263 (PGLRPQSYTLQVHEEDQDVERSQVRSAAQQSTWRDFGRKLRLLSGYLWPRGSPALQL) lie on the Cytoplasmic side of the membrane. A helical transmembrane segment spans residues 264-284 (VVLICLGLMGLERALNVLVPI). The ABC transmembrane type-1 domain occupies 265–556 (VLICLGLMGL…FGTYYRMIQT (292 aa)). Topologically, residues 285 to 291 (FYRNIVN) are lumenal. A helical membrane pass occupies residues 292 to 312 (LLTEKAPWNSLAWTVTSYVFL). Residues 313–375 (KFLQGGGTGS…TGEVLRIADR (63 aa)) are Cytoplasmic-facing. A helical membrane pass occupies residues 376–396 (GTSSVTGLLSYLVFNVIPTLA). A topological domain (lumenal) is located at residue Asp397. Residues 398–418 (IIIGIIYFSMFFNAWFGLIVF) traverse the membrane as a helical segment. Over 419–499 (LCMSLYLTLT…SSASLVLLNQ (81 aa)) the chain is Cytoplasmic. A helical membrane pass occupies residues 500 to 520 (TQNLVIGLGLLAGSLLCAYFV). Topologically, residues 521–529 (TEQKLQVGD) are lumenal. The chain crosses the membrane as a helical span at residues 530 to 550 (YVLFGTYIIQLYMPLNWFGTY). The Cytoplasmic segment spans residues 551-842 (YRMIQTNFID…EDTKPQTMER (292 aa)). Positions 590 to 824 (IEFENVHFSY…GGVYADMWQL (235 aa)) constitute an ABC transporter domain. Residues Tyr599 and 623-634 (GPSGAGKSTILR) contribute to the ATP site.

It belongs to the ABC transporter superfamily. ABCB family. Heavy Metal importer (TC 3.A.1.210) subfamily. In terms of assembly, homodimer. In terms of processing, N-glycosylated. Widely expressed. High expression is detected in the retinal epithelium. Expressed in mature erythrocytes.

It localises to the cell membrane. It is found in the mitochondrion outer membrane. The protein localises to the endoplasmic reticulum membrane. The protein resides in the golgi apparatus membrane. Its subcellular location is the endosome membrane. It localises to the lysosome membrane. It is found in the late endosome membrane. The protein localises to the early endosome membrane. The protein resides in the secreted. Its subcellular location is the extracellular exosome. It localises to the mitochondrion. It is found in the endosome. The protein localises to the multivesicular body membrane. The protein resides in the melanosome membrane. It catalyses the reaction heme b(in) + ATP + H2O = heme b(out) + ADP + phosphate + H(+). The enzyme catalyses coproporphyrin III(in) + ATP + H2O = coproporphyrin III(out) + ADP + phosphate + H(+). It carries out the reaction pheophorbide a(in) + ATP + H2O = pheophorbide a(out) + ADP + phosphate + H(+). The catalysed reaction is coproporphyrinogen III(in) + ATP + H2O = coproporphyrinogen III(out) + ADP + phosphate + H(+). It catalyses the reaction protoporphyrin IX(in) + ATP + H2O = protoporphyrin IX(out) + ADP + phosphate + H(+). The enzyme catalyses coproporphyrin I(in) + ATP + H2O = coproporphyrin I(out) + ADP + phosphate + H(+). It carries out the reaction uroporphyrin I(in) + ATP + H2O = uroporphyrin I(out) + ADP + phosphate + H(+). The catalysed reaction is uroporphyrin III(in) + ATP + H2O = uroporphyrin III(out) + ADP + phosphate + H(+). With respect to regulation, ATPase activity is inhibited by MgATP with an IC(50) of 1.03 mM and up-regulated by coporphyrin III&gt; hemin &gt; protoporphyrin IX. ATPase activity for hemin is up-regulated by glutathione. The ATPase activity is impaired by increasing copper concentrations (0-300 uM). The ATPase activity is stimulated in presence of glutathione for increasing copper concentrations (0-300 uM). Its function is as follows. ATP-dependent transporter that catalyzes the transport of a broad-spectrum of porphyrins from the cytoplasm to the extracellular space through the plasma membrane or into the vesicle lumen. May also function as an ATP-dependent importer of porphyrins from the cytoplasm into the mitochondria, in turn may participate in the de novo heme biosynthesis regulation and in the coordination of heme and iron homeostasis during phenylhydrazine stress. May also play a key role in the early steps of melanogenesis producing PMEL amyloid fibrils. In vitro, it confers to cells a resistance to toxic metal such as arsenic and cadmium and against chemotherapeutics agent such as 5-fluorouracil, SN-38 and vincristin. In addition may play a role in the transition metal homeostasis. The protein is ATP-binding cassette sub-family B member 6 of Homo sapiens (Human).